We begin with the raw amino-acid sequence, 263 residues long: Protein phosphatase type 2A regulatory subunit RTS3 (263 aa).

Disordered stretches follow at residues 1–62 (MIAT…AQRR) and 149–176 (LPLTPKDSMTHISHSARRSSRNASISNG). Residues 46 to 61 (LSTSSSPSSSPMSAQR) are compositionally biased toward low complexity. A phosphoserine mark is found at serine 172, serine 192, serine 214, and serine 238.

Its subcellular location is the cytoplasm. It localises to the nucleus. Its function is as follows. May be a component of a protein phosphatase type 2A (PP2A) complex. Negatively regulates SIT4 phosphatase, a modulators of caffeine sensitivity. This chain is Protein phosphatase type 2A regulatory subunit RTS3 (RTS3), found in Saccharomyces cerevisiae (strain ATCC 204508 / S288c) (Baker's yeast).